A 253-amino-acid polypeptide reads, in one-letter code: uncharacterized protein (253 aa).

The span at 1–14 shows a compositional bias: low complexity; sequence MKVPILSRLRSLSS. Disordered stretches follow at residues 1–192 and 212–253; these read MKVP…PKSS and PETV…AIQL. Composition is skewed to basic and acidic residues over residues 17-30 and 45-60; these read RNNE…EHQV and KSDK…KSGE. Composition is skewed to low complexity over residues 63 to 104 and 111 to 154; these read PSTP…GSDS and KTLS…QTPR. The span at 215–235 shows a compositional bias: polar residues; sequence VVTSTPRQQSRPPSAQNTPNF. Low complexity predominate over residues 236–253; the sequence is TSQGGSRSTSRRQSAIQL.

This is an uncharacterized protein from Dictyostelium discoideum (Social amoeba).